The following is a 451-amino-acid chain: E3 ubiquitin-protein ligase trul-1 (451 aa).

Residues 13–54 (CSICFEDLKQNDKISAIVCGHIYHHGCISQWIATKRQCPSCR) form an RING-type; atypical zinc finger. Coiled-coil stretches lie at residues 96-130 (LKVEQEKLGTLNTENKNLKDTVKSLEKKIIREKDK) and 209-243 (NKDLTDKRREAAKEIEQLKMEVQSLKRAAQEDAAI). Disordered stretches follow at residues 270-297 (RDVLETETPPPAKRKSMGFDESSQMIDP) and 389-442 (KIPN…SSTS). Residues 427–442 (STRISSFFSRTTSSTS) are compositionally biased toward low complexity.

The protein belongs to the TRAIP family.

The protein resides in the nucleus. The protein localises to the chromosome. It carries out the reaction S-ubiquitinyl-[E2 ubiquitin-conjugating enzyme]-L-cysteine + [acceptor protein]-L-lysine = [E2 ubiquitin-conjugating enzyme]-L-cysteine + N(6)-ubiquitinyl-[acceptor protein]-L-lysine.. It functions in the pathway protein modification; protein ubiquitination. E3 ubiquitin ligase that acts as a key regulator of DNA repair in response to replication stress. Acts by mediating ubiquitination of the CMG helicase complex, promoting the unloading of the CMG helicase complex by the p97 ATPase (cdc-48.1 or cdc-48.2). The polypeptide is E3 ubiquitin-protein ligase trul-1 (Caenorhabditis elegans).